The primary structure comprises 460 residues: MSGKSIFDKLWDRHVITGDEGQPQLMYVDQHYIHEVTSPQAFQGLRDAGRKVRRPDLTFGTFDHNVPTVNIFDIRDAISKAQIDKLAENVIEFGIDNASHGSDKQGIVHMVGPETGRTQPGKFIVCGDSHTATHGAFGAIAFGIGTSEVEHVFATQTLWQVKPKKMLLEFTGKPQKGIYSKDYILALIAKYGVACGVGYVVEYRGEAIDRLTMEERMTICNMSIEFGSKMGIMNPDQTTYDYMRGRECVPEDFDAAVADWKTLVSDDDAEYDKVIRMDVSELAPMVTWGTNPSMGVDFDTPFPEVRDMNDERAYHYMGLRPGQKAEDINLGYIFIGSCTNARLSDLQLAARIVKGKKISPNLTAIVVPGSRPVKRAAEKIGLDKIFKDAGFEWREPGCSMCLGMNPDKVPDGVHCASTSNRNFEDRQGFGAKTHLCSPAMAAAAAISGHFVDVRRMPEVQ.

[4Fe-4S] cluster is bound by residues cysteine 338, cysteine 398, and cysteine 401.

Belongs to the aconitase/IPM isomerase family. LeuC type 1 subfamily. As to quaternary structure, heterodimer of LeuC and LeuD. It depends on [4Fe-4S] cluster as a cofactor.

The catalysed reaction is (2R,3S)-3-isopropylmalate = (2S)-2-isopropylmalate. It participates in amino-acid biosynthesis; L-leucine biosynthesis; L-leucine from 3-methyl-2-oxobutanoate: step 2/4. Its function is as follows. Catalyzes the isomerization between 2-isopropylmalate and 3-isopropylmalate, via the formation of 2-isopropylmaleate. The polypeptide is 3-isopropylmalate dehydratase large subunit (Streptococcus thermophilus (strain CNRZ 1066)).